The chain runs to 373 residues: Molybdenum import ATP-binding protein ModC (373 aa).

The 237-residue stretch at 4 to 240 (LTPPTIRAAF…PKLPLAIARD (237 aa)) folds into the ABC transporter domain. 38 to 45 (GPSGCGKS) is an ATP binding site. In terms of domain architecture, Mop spans 299–369 (ASSILNAIAA…IKGVALAPGR (71 aa)).

This sequence belongs to the ABC transporter superfamily. Molybdate importer (TC 3.A.1.8) family. As to quaternary structure, the complex is composed of two ATP-binding proteins (ModC), two transmembrane proteins (ModB) and a solute-binding protein (ModA).

The protein resides in the cell inner membrane. The enzyme catalyses molybdate(out) + ATP + H2O = molybdate(in) + ADP + phosphate + H(+). Part of the ABC transporter complex ModABC involved in molybdenum import. Responsible for energy coupling to the transport system. The protein is Molybdenum import ATP-binding protein ModC of Rhodopseudomonas palustris (strain ATCC BAA-98 / CGA009).